We begin with the raw amino-acid sequence, 242 residues long: E3 ubiquitin-protein ligase ZNRF2 (242 aa).

The interval 1-141 (MGAKQSGPAA…VGGSPGGPRL (141 aa)) is disordered. Residue Gly-2 is the site of N-myristoyl glycine attachment. A phosphoserine mark is found at Ser-19, Ser-21, and Ser-25. Positions 19–29 (SGSDLPSSSSG) are enriched in low complexity. Gly residues predominate over residues 30–41 (GANGTAGGGGGA). The segment covering 59–97 (PSASGGAAAAAAAPAAPAAPRSRSLGGAVGSVASGARAA) has biased composition (low complexity). Phosphoserine is present on residues Ser-82, Ser-89, Ser-113, Ser-116, and Ser-135. A compositionally biased stretch (polar residues) spans 99–118 (SPFSIPNSSSGPYGSQDSVH). Ser-145 bears the Phosphoserine; by MTOR mark. Phosphoserine is present on residues Ser-151 and Ser-193. An RING-type; atypical zinc finger spans residues 199-240 (CAICLEELQQGDTIARLPCLCIYHKGCIDEWFEVNRSCPEHP).

As to quaternary structure, interacts with UBE2N. Interacts with ZNRF1. Interacts (when phosphorylated) with YWHAE. In terms of processing, phosphorylated; leading to binding to YWHAE. Phosphorylated by MTOR at Ser-145 and dephosphorylated by PP6C. Ser-145 phosphorylation stimulates vesicle-to-cytosol translocation. In terms of tissue distribution, highly expressed in the brain, with higher expression during development than in adult. Expressed also in mammary glands, testis, colon and kidney.

It localises to the endosome membrane. The protein localises to the lysosome membrane. The protein resides in the presynaptic cell membrane. Its subcellular location is the cytoplasm. It catalyses the reaction S-ubiquitinyl-[E2 ubiquitin-conjugating enzyme]-L-cysteine + [acceptor protein]-L-lysine = [E2 ubiquitin-conjugating enzyme]-L-cysteine + N(6)-ubiquitinyl-[acceptor protein]-L-lysine.. The protein operates within protein modification; protein ubiquitination. E3 ubiquitin-protein ligase that plays a role in the establishment and maintenance of neuronal transmission and plasticity. Ubiquitinates the Na(+)/K(+) ATPase alpha-1 subunit/ATP1A1 and thereby influences its endocytosis and/or degradation. Acts also as a positive regulator of mTORC1 activation by amino acids, which functions upstream of the V-ATPase and of Rag-GTPases. In turn, phosphorylation by mTOR leads to its inhibition via targeting to the cytosol allowing a self-regulating feedback mechanism. The polypeptide is E3 ubiquitin-protein ligase ZNRF2 (ZNRF2) (Homo sapiens (Human)).